We begin with the raw amino-acid sequence, 480 residues long: Docking protein 1 (480 aa).

Met-1 is modified (N-acetylmethionine). Residues 3–119 enclose the PH domain; the sequence is GALMEGPLFL…WVQILCRTAF (117 aa). Ser-48 carries the phosphoserine modification. The IRS-type PTB domain maps to 151–259; that stretch reads EGSQFWVTSQ…QQQKAQGKVG (109 aa). Residues 253–262 show a composition bias toward low complexity; sequence KAQGKVGQGQ. Positions 253-328 are disordered; sequence KAQGKVGQGQ…GSTPAGAGEG (76 aa). The segment covering 265 to 276 has biased composition (basic and acidic residues); that stretch reads TRTDSHDGETEG. Ser-269 and Ser-290 each carry phosphoserine. Phosphotyrosine occurs at positions 295, 336, and 340. Tyr-361 carries the post-translational modification Phosphotyrosine; by INSR. Residue Tyr-376 is modified to Phosphotyrosine. Phosphotyrosine; by INSR is present on Tyr-397. Positions 398–480 are disordered; it reads ELPYNPATDD…RVGVKSEGST (83 aa). Tyr-408 carries the post-translational modification Phosphotyrosine. Residues 410–423 are compositionally biased toward pro residues; the sequence is VPPPRSSKPTPAPK. Ser-415 carries the post-translational modification Phosphoserine. The segment covering 432–445 has biased composition (low complexity); it reads SGTTAGSGSKGSDT. Polar residues predominate over residues 446–455; it reads ALYSQVQKSG. Tyr-448 carries the phosphotyrosine modification.

The protein belongs to the DOK family. Type A subfamily. As to quaternary structure, interacts with RasGAP and INPP5D/SHIP1. Interacts directly with phosphorylated ITGB3. Interacts with SRMS (via the SH2 and SH3 domains). Post-translationally, constitutively tyrosine-phosphorylated. Phosphorylated by TEC. Phosphorylated by LYN. Phosphorylated on tyrosine residues by the insulin receptor kinase. Results in the negative regulation of the insulin signaling pathway. Phosphorylated on tyrosine residues by SRMS.

Its subcellular location is the cytoplasm. The protein localises to the nucleus. Its function is as follows. DOK proteins are enzymatically inert adaptor or scaffolding proteins. They provide a docking platform for the assembly of multimolecular signaling complexes. DOK1 appears to be a negative regulator of the insulin signaling pathway. Modulates integrin activation by competing with talin for the same binding site on ITGB3. The chain is Docking protein 1 (Dok1) from Rattus norvegicus (Rat).